Here is a 628-residue protein sequence, read N- to C-terminus: FAD-linked oxidoreductase easE (628 aa).

A signal peptide spans 1-20 (MSHRILCVAFCVCSLVAVSS). Residues 144–328 (HQGRIPLYSA…TRATMRVHLN (185 aa)) enclose the FAD-binding PCMH-type domain. The residue at position 182 (His182) is a Pros-8alpha-FAD histidine. 3 N-linked (GlcNAc...) asparagine glycosylation sites follow: Asn343, Asn382, and Asn487.

This sequence belongs to the oxygen-dependent FAD-linked oxidoreductase family. Requires FAD as cofactor.

It participates in alkaloid biosynthesis; ergot alkaloid biosynthesis. Functionally, FAD binding oxidoreductase; part of the gene cluster that mediates the biosynthesis of fumiclavanine C, a fungal ergot alkaloid. DmaW catalyzes the first step of ergot alkaloid biosynthesis by condensing dimethylallyl diphosphate (DMAP) and tryptophan to form 4-dimethylallyl-L-tryptophan. The second step is catalyzed by the methyltransferase easF that methylates 4-dimethylallyl-L-tryptophan in the presence of S-adenosyl-L-methionine, resulting in the formation of 4-dimethylallyl-L-abrine. The catalase easC and the FAD-dependent oxidoreductase easE then transform 4-dimethylallyl-L-abrine to chanoclavine-I which is further oxidized by EasD in the presence of NAD(+), resulting in the formation of chanoclavine-I aldehyde. EasA reduces chanoclavine-I aldehyde to dihydrochanoclavine-I aldehyde that spontaneously dehydrates to form 6,8-dimethyl-6,7-didehydroergoline. EasG then catalyzes the reduction of 6,8-dimethyl-6,7-didehydroergoline to form festuclavine. Hydrolysis of festuclavine by easM then leads to the formation of fumigaclavine B which is in turn acetylated by easN to fumigaclavine A. Finally, easL catalyzes the conversion of fumigaclavine A into fumigaclavine C by attaching a dimethylallyl moiety to C-2 of the indole nucleus. The sequence is that of FAD-linked oxidoreductase easE from Aspergillus fumigatus (strain ATCC MYA-4609 / CBS 101355 / FGSC A1100 / Af293) (Neosartorya fumigata).